Here is a 582-residue protein sequence, read N- to C-terminus: DNA mismatch repair protein MutL (582 aa).

This sequence belongs to the DNA mismatch repair MutL/HexB family.

In terms of biological role, this protein is involved in the repair of mismatches in DNA. It is required for dam-dependent methyl-directed DNA mismatch repair. May act as a 'molecular matchmaker', a protein that promotes the formation of a stable complex between two or more DNA-binding proteins in an ATP-dependent manner without itself being part of a final effector complex. In Chlamydia abortus (strain DSM 27085 / S26/3) (Chlamydophila abortus), this protein is DNA mismatch repair protein MutL.